A 65-amino-acid chain; its full sequence is Hainantoxin-X.2 (65 aa).

The N-terminal stretch at 1–20 (MNVKILVLVAVLCLVVSTHA) is a signal peptide. A propeptide spanning residues 21 to 37 (ERHSKTDMEDSPMIQER) is cleaved from the precursor. Disulfide bonds link Cys-39–Cys-56, Cys-46–Cys-59, and Cys-55–Cys-64.

It belongs to the neurotoxin 36 family. 02 subfamily. In terms of tissue distribution, expressed by the venom gland.

The protein localises to the secreted. Functionally, reversibly blocks N-type calcium channels (Cav2.2/CACNA1B) in rat dorsal root ganglion cells. Elicits no toxic symptoms in either vertebrates or invertebrates during a period of 48 hours post-injection, when it was assayed in vivo by direct injection into mice and cockroaches. This is Hainantoxin-X.2 from Cyriopagopus hainanus (Chinese bird spider).